A 342-amino-acid chain; its full sequence is Foldase protein PrsA (342 aa).

Positions 1–22 (MVSVKKIVASALVGVLMFSAVG) are cleaved as a signal peptide. Cys-23 carries N-palmitoyl cysteine lipidation. Cys-23 is lipidated: S-diacylglycerol cysteine. The 96-residue stretch at 189 to 284 (DSGVLTKHLL…FGYHIIQAGA (96 aa)) folds into the PpiC domain.

Belongs to the PrsA family.

The protein resides in the cell membrane. The enzyme catalyses [protein]-peptidylproline (omega=180) = [protein]-peptidylproline (omega=0). Its function is as follows. Plays a major role in protein secretion by helping the post-translocational extracellular folding of several secreted proteins. This is Foldase protein PrsA from Clostridium perfringens (strain 13 / Type A).